Reading from the N-terminus, the 406-residue chain is Prisilkin-39 (406 aa).

The signal sequence occupies residues 1–19 (MKGFLTLLLVCAILSTGYC). Transmembrane regions (helical) follow at residues 26–48 (ALTGLVAGATIGALASGGLGAGA) and 58–80 (VGVGAVGIPVAVGGGIPYGYGGY). Residues 78–197 (GGYSGYGYGY…YSGYSYGYPT (120 aa)) form a 10 X 12 AA tandem repeat of G-G-Y-[SG]-G-Y-[GS]-Y-G-Y-P-[AT] region.

As to expression, expression is confined to the prism and organic layers of the shell with no expression detected in the nacreous shell layer. Also expressed in the mantle edge, extrapallial fluid, hemolymph and, to a lesser extent, in the viscus (at protein level). In the mantle, localizes to inner epithelial cells of the outer fold and the outer epithelial cells of the middle fold at the bottom of the periostracal groove.

The protein localises to the membrane. Functionally, binds chitin and may serve as a framework constituent participating in shell formation. Inhibits aragonite precipitation and may regulate aragonite growth during shell layer formation. Does not affect calcite crystallization. This is Prisilkin-39 from Pinctada fucata (Akoya pearl oyster).